The chain runs to 241 residues: Uridylate kinase (241 aa).

ATP is bound at residue 12–15 (KISG). The interval 20-25 (GEKGTG) is involved in allosteric activation by GTP. Glycine 54 lines the UMP pocket. Residues glycine 55 and arginine 59 each coordinate ATP. UMP contacts are provided by residues aspartate 74 and 135-142 (TGNPYFST). The ATP site is built by asparagine 163, tyrosine 169, and aspartate 172.

It belongs to the UMP kinase family. Homohexamer.

It localises to the cytoplasm. The enzyme catalyses UMP + ATP = UDP + ADP. It participates in pyrimidine metabolism; CTP biosynthesis via de novo pathway; UDP from UMP (UMPK route): step 1/1. With respect to regulation, allosterically activated by GTP. Inhibited by UTP. Catalyzes the reversible phosphorylation of UMP to UDP. The polypeptide is Uridylate kinase (Lactobacillus delbrueckii subsp. bulgaricus (strain ATCC 11842 / DSM 20081 / BCRC 10696 / JCM 1002 / NBRC 13953 / NCIMB 11778 / NCTC 12712 / WDCM 00102 / Lb 14)).